The primary structure comprises 444 residues: Aflatoxin biosynthesis regulatory protein (444 aa).

A disordered region spans residues 1–26 (MVDHISPRASPGPIRSSQTRRARKLR). Residues 29 to 56 (CTSCASSKVRCTKEKPACARCIERGLAC) constitute a DNA-binding region (zn(2)-C6 fungal-type). The segment at 64–167 (MGRNPRAPSP…QGLGGDLAGQ (104 aa)) is disordered. Positions 106-116 (TQAHTHAHSHP) are enriched in basic residues. Low complexity predominate over residues 120 to 130 (PQSHPQSNQPP). Residues 136–149 (PNGSSSVSAIFSHQ) are compositionally biased toward polar residues.

Interacts with its co-regulator aflS.

It localises to the nucleus. Its subcellular location is the endosome. In terms of biological role, transcription factor involved in regulation of the aflatoxin biosynthesis gene cluster. Binds with its co-regulator aflS to AFLR1 elements (5'-TCGSWNNSCGR-3') present in the promoters of the aflatoxin cluster genes. The ratio of the expression data between aflS:aflR plays a crucial role in the regulation of aflatoxins production. A high ratio, produced at a range between 17 and 30 degrees Celsius, corresponds with the production profile of aflatoxin G1 biosynthesis. A low ratio, produced over 30 degrees Celsius, is related to aflatoxin B1 biosynthesis. This Aspergillus parasiticus (strain ATCC 56775 / NRRL 5862 / SRRC 143 / SU-1) protein is Aflatoxin biosynthesis regulatory protein.